Consider the following 252-residue polypeptide: Tabtoxin biosynthesis enzyme (252 aa).

Residues 1-23 (MYQRTATQLARKPASKQGETEMN) form a disordered region.

Its function is as follows. May play a role in tabtoxin biosynthesis. The polypeptide is Tabtoxin biosynthesis enzyme (tblA) (Pseudomonas amygdali pv. tabaci (Pseudomonas syringae pv. tabaci)).